A 239-amino-acid polypeptide reads, in one-letter code: tRNA (guanine-N(1)-)-methyltransferase (239 aa).

Residues Gly112 and 131-136 (LGDFIL) each bind S-adenosyl-L-methionine.

It belongs to the RNA methyltransferase TrmD family. Homodimer.

It is found in the cytoplasm. It catalyses the reaction guanosine(37) in tRNA + S-adenosyl-L-methionine = N(1)-methylguanosine(37) in tRNA + S-adenosyl-L-homocysteine + H(+). In terms of biological role, specifically methylates guanosine-37 in various tRNAs. The polypeptide is tRNA (guanine-N(1)-)-methyltransferase (Clostridium tetani (strain Massachusetts / E88)).